The chain runs to 147 residues: uncharacterized protein (147 aa).

A run of 2 helical transmembrane segments spans residues 41 to 61 and 67 to 87; these read LANF…ALLI and LLAA…SFPL.

It localises to the cell membrane. This is an uncharacterized protein from Pyrococcus horikoshii (strain ATCC 700860 / DSM 12428 / JCM 9974 / NBRC 100139 / OT-3).